Consider the following 161-residue polypeptide: AP-1 complex subunit sigma-1 (161 aa).

This sequence belongs to the adaptor complexes small subunit family. As to quaternary structure, adaptor protein complex 1 (AP-1) is a heterotetramer composed of two large adaptins (gamma-type subunit and beta-type subunit), a medium adaptin (mu-type subunit) and a small adaptin (sigma-type subunit). In terms of tissue distribution, expressed in seedlings, roots, stems, leaves, flowers and siliques (developing fruits and seeds).

It is found in the golgi apparatus. The protein localises to the cytoplasmic vesicle. Its subcellular location is the clathrin-coated vesicle membrane. Its function is as follows. Subunit of clathrin-associated adaptor protein complex 1 that plays a role in protein sorting at the trans-Golgi network and early endosomes (TGN/EE). The AP complexes mediate the recruitment of clathrin to membranes and the recognition of sorting signals within the cytosolic tails of transmembrane cargo molecules. This Arabidopsis thaliana (Mouse-ear cress) protein is AP-1 complex subunit sigma-1 (AAP19-1).